Reading from the N-terminus, the 493-residue chain is Alpha-amylase-related protein (493 aa).

Residues 1 to 19 (MFKLALTLTLCLAGSLSLA) form the signal peptide. Q20 is modified (pyrrolidone carboxylic acid). C47 and C103 are disulfide-bonded. Ca(2+) contacts are provided by N117, Q168, and D177. Cysteines 156 and 170 form a disulfide. R205 contacts chloride. D207 (nucleophile) is an active-site residue. H211 serves as a coordination point for Ca(2+). The active-site Proton donor is the E244. Chloride is bound by residues N307 and R342. Cystine bridges form between C375-C381, C417-C440, and C447-C459.

Belongs to the glycosyl hydrolase 13 family. As to quaternary structure, monomer. The cofactor is Ca(2+). Chloride is required as a cofactor.

The protein resides in the secreted. The enzyme catalyses Endohydrolysis of (1-&gt;4)-alpha-D-glucosidic linkages in polysaccharides containing three or more (1-&gt;4)-alpha-linked D-glucose units.. This Drosophila yakuba (Fruit fly) protein is Alpha-amylase-related protein (Amyrel).